Consider the following 360-residue polypeptide: G-protein coupled receptor 15 (360 aa).

The Extracellular segment spans residues 1-33; the sequence is MDPEETSVYLDYYYATSPNPDIRETHSHVPYTS. Residues 34-54 form a helical membrane-spanning segment; that stretch reads VFLPVFYTAVFLTGVLGNLVL. Residues 55-69 are Cytoplasmic-facing; sequence MGALHFKPGSRRLID. The helical transmembrane segment at 70-90 threads the bilayer; it reads IFIINLAASDFIFLVTLPLWV. Residues 91–120 lie on the Extracellular side of the membrane; sequence DKEASLGLWRTGSFLCKGSSYMISVNMHCS. The helical transmembrane segment at 121–141 threads the bilayer; it reads VFLLTCMSVDRYLAIVCPVVS. Residues 142–149 lie on the Cytoplasmic side of the membrane; it reads RKFRRTDC. Residues 150–170 form a helical membrane-spanning segment; it reads AYVVCASIWFISCLLGLPTLL. The Extracellular segment spans residues 171–192; sequence SRELTLIDDKPYCAEKKATPLK. The helical transmembrane segment at 193 to 213 threads the bilayer; the sequence is LIWSLVALIFTFFVPLLSIVT. Topologically, residues 214–239 are cytoplasmic; the sequence is CYCCIARKLCAHYQQSGKHNKKLKKS. Residues 240-260 form a helical membrane-spanning segment; the sequence is IKIIFIVVAAFLVSWLPFNTS. The Extracellular portion of the chain corresponds to 261–284; sequence KLLAIVSGLQQERYFPSAILQLGM. The chain crosses the membrane as a helical span at residues 285–305; it reads EVSGPLAFANSCVNPFIYYIF. The Cytoplasmic segment spans residues 306–360; the sequence is DSYIRRAIVHCLCPCLKNYDFGSSTETSDSHLTKALSTFIHAEDFTRRRKRSVSL. Phosphoserine is present on Ser359.

This sequence belongs to the G-protein coupled receptor 1 family. As to quaternary structure, interacts with adapter YWHAE; this interaction promotes ER-to-Golgi transport of GPR15. Post-translationally, phosphorylation is necessary for YWHAE binding and efficient surface expression. O-glycosylated. Sialylated O-glycans in the N-terminal tail inhibits binding of GPR15LG. In terms of processing, sulfation is required for efficient binding of GPR15LG.

The protein localises to the cell membrane. In terms of biological role, g protein-coupled receptor that plays an important role in immune homeostasis. Acts via its natural ligand GPR15LG, a chemokine-like polypeptide strongly expressed in gastrointestinal tissues. GPR15-GPR15LG signaling axis regulates intestinal homeostasis and inflammation through the migration of immune cells. Controls thereby the specific homing of T-cells, particularly FOXP3+ regulatory T-cells (Tregs), to the large intestine lamina propria. Also required for skin localization of thymus-derived dendritic epidermal T-cells. Plays an important role in mediating cytoprotective function as well as angiogenesis of thrombomodulin. Mechanistically, preferentially signals through the Gi/o pathway to inhibit adenylate cyclase activity and activate a phosphatidylinositol-calcium second messenger system that regulates the release of Ca(2+) ions from intracellular stores. In Macaca nemestrina (Pig-tailed macaque), this protein is G-protein coupled receptor 15 (GPR15).